The primary structure comprises 270 residues: 4-hydroxy-tetrahydrodipicolinate reductase (270 aa).

Residues 11 to 16 and Glu-37 each bind NAD(+); that span reads GASGRM. Arg-38 lines the NADP(+) pocket. Residues 101–103 and 125–128 contribute to the NAD(+) site; these read GTT and APNM. The active-site Proton donor/acceptor is the His-158. His-159 contributes to the (S)-2,3,4,5-tetrahydrodipicolinate binding site. The active-site Proton donor is Lys-162. 168-169 provides a ligand contact to (S)-2,3,4,5-tetrahydrodipicolinate; sequence GT.

The protein belongs to the DapB family.

It is found in the cytoplasm. It carries out the reaction (S)-2,3,4,5-tetrahydrodipicolinate + NAD(+) + H2O = (2S,4S)-4-hydroxy-2,3,4,5-tetrahydrodipicolinate + NADH + H(+). It catalyses the reaction (S)-2,3,4,5-tetrahydrodipicolinate + NADP(+) + H2O = (2S,4S)-4-hydroxy-2,3,4,5-tetrahydrodipicolinate + NADPH + H(+). It functions in the pathway amino-acid biosynthesis; L-lysine biosynthesis via DAP pathway; (S)-tetrahydrodipicolinate from L-aspartate: step 4/4. Its function is as follows. Catalyzes the conversion of 4-hydroxy-tetrahydrodipicolinate (HTPA) to tetrahydrodipicolinate. This chain is 4-hydroxy-tetrahydrodipicolinate reductase, found in Shewanella frigidimarina (strain NCIMB 400).